A 264-amino-acid chain; its full sequence is ATP synthase subunit a (264 aa).

Transmembrane regions (helical) follow at residues 29-49 (TWHI…LWLF), 89-109 (VIAP…FMDM), 134-154 (DLNI…YYSI), 177-197 (IPVN…SLAL), 208-228 (LIFI…TLGV), and 235-255 (LIFH…LTIV).

Belongs to the ATPase A chain family. F-type ATPases have 2 components, CF(1) - the catalytic core - and CF(0) - the membrane proton channel. CF(1) has five subunits: alpha(3), beta(3), gamma(1), delta(1), epsilon(1). CF(0) has three main subunits: a(1), b(2) and c(9-12). The alpha and beta chains form an alternating ring which encloses part of the gamma chain. CF(1) is attached to CF(0) by a central stalk formed by the gamma and epsilon chains, while a peripheral stalk is formed by the delta and b chains.

It is found in the cell inner membrane. Key component of the proton channel; it plays a direct role in the translocation of protons across the membrane. This is ATP synthase subunit a from Shewanella woodyi (strain ATCC 51908 / MS32).